The chain runs to 113 residues: Bactofilin BacN (113 aa).

Belongs to the bactofilin family. Interacts with BacO and BacP, the 3 proteins colocalize as an extended structure.

It is found in the cytoplasm. The protein resides in the cytoskeleton. A non-essential component of the chromosome segregation machinery. Positions the ParA-ParB-parS chromosome segregation machinery within the cell; BacP seems to be the most important bactofilin in this process. Forms a heteropolymeric, subpolar scaffold in the cell; BacP probably forms the core, BacO contributes to position and integrity while BacN does not seem to contribute to assembly. The polypeptide is Bactofilin BacN (Myxococcus xanthus (strain DK1622)).